Here is a 444-residue protein sequence, read N- to C-terminus: Exodeoxyribonuclease 7 large subunit (444 aa).

This sequence belongs to the XseA family. In terms of assembly, heterooligomer composed of large and small subunits.

Its subcellular location is the cytoplasm. It catalyses the reaction Exonucleolytic cleavage in either 5'- to 3'- or 3'- to 5'-direction to yield nucleoside 5'-phosphates.. Bidirectionally degrades single-stranded DNA into large acid-insoluble oligonucleotides, which are then degraded further into small acid-soluble oligonucleotides. The polypeptide is Exodeoxyribonuclease 7 large subunit (Rickettsia akari (strain Hartford)).